The primary structure comprises 122 residues: MIQPQTHLNVADNSGARKLMCIRIIGASNRRYAKIGDVVVAVIKEAIPNTPLERSEVIRAVIVRTCKELKRDNGMIIRYDDNAAVVIDQERNPKGTRIFGAIARELRQLNFTKIVSLAPEVL.

The protein belongs to the universal ribosomal protein uL14 family. As to quaternary structure, part of the 50S ribosomal subunit.

Its subcellular location is the plastid. It localises to the chloroplast. Binds to 23S rRNA. This Morus indica (Mulberry) protein is Large ribosomal subunit protein uL14c.